Here is a 577-residue protein sequence, read N- to C-terminus: 2-succinyl-5-enolpyruvyl-6-hydroxy-3-cyclohexene-1-carboxylate synthase (577 aa).

This sequence belongs to the TPP enzyme family. MenD subfamily. As to quaternary structure, homodimer. Mg(2+) is required as a cofactor. It depends on Mn(2+) as a cofactor. Thiamine diphosphate serves as cofactor.

It carries out the reaction isochorismate + 2-oxoglutarate + H(+) = 5-enolpyruvoyl-6-hydroxy-2-succinyl-cyclohex-3-ene-1-carboxylate + CO2. It functions in the pathway quinol/quinone metabolism; 1,4-dihydroxy-2-naphthoate biosynthesis; 1,4-dihydroxy-2-naphthoate from chorismate: step 2/7. It participates in quinol/quinone metabolism; menaquinone biosynthesis. Its function is as follows. Catalyzes the thiamine diphosphate-dependent decarboxylation of 2-oxoglutarate and the subsequent addition of the resulting succinic semialdehyde-thiamine pyrophosphate anion to isochorismate to yield 2-succinyl-5-enolpyruvyl-6-hydroxy-3-cyclohexene-1-carboxylate (SEPHCHC). This Geobacillus kaustophilus (strain HTA426) protein is 2-succinyl-5-enolpyruvyl-6-hydroxy-3-cyclohexene-1-carboxylate synthase.